The following is a 359-amino-acid chain: MSLQAIIYNEDKLLVLDQLLLPYERKYISVSNVEDAFAVIKKMQVRGAPAIAIVAALSVAVGLKHLSEDADAKEYVINSFEHLKQSRPTAVNLFETAKFMQGIALQEGKNCRNKIIQEAERMLVKDLEDNHNIGTAGRKFLLQHYKDKDKLTVLTHCNTGSLATSGYGTALGIIRSLHESGNLEHAYCTETRPYNQGSRLTAFELVHDKIPATLVTDSTVASIMHKIDAIVVGADRVTRNGDTANKIGTYNLAILAKHFGKPFIVAAPFSSIDTSLASGSQITIEQRPPIEMTTITGPIITDSNSRNLEDPKRVRISIAAPGIDVYSPAFDVTPANLITAIATEKGFYTQQTNNKYDFS.

Asp-235 serves as the catalytic Proton donor.

This sequence belongs to the eIF-2B alpha/beta/delta subunits family. MtnA subfamily.

Its subcellular location is the cytoplasm. The protein resides in the nucleus. It catalyses the reaction 5-(methylsulfanyl)-alpha-D-ribose 1-phosphate = 5-(methylsulfanyl)-D-ribulose 1-phosphate. It participates in amino-acid biosynthesis; L-methionine biosynthesis via salvage pathway; L-methionine from S-methyl-5-thio-alpha-D-ribose 1-phosphate: step 1/6. Catalyzes the interconversion of methylthioribose-1-phosphate (MTR-1-P) into methylthioribulose-1-phosphate (MTRu-1-P). This chain is Methylthioribose-1-phosphate isomerase (mri1), found in Schizosaccharomyces pombe (strain 972 / ATCC 24843) (Fission yeast).